Reading from the N-terminus, the 309-residue chain is Ribonuclease Z (309 aa).

Residues H63, H65, D67, H68, H141, D208, and H266 each contribute to the Zn(2+) site. The active-site Proton acceptor is the D67.

The protein belongs to the RNase Z family. In terms of assembly, homodimer. Requires Zn(2+) as cofactor.

The enzyme catalyses Endonucleolytic cleavage of RNA, removing extra 3' nucleotides from tRNA precursor, generating 3' termini of tRNAs. A 3'-hydroxy group is left at the tRNA terminus and a 5'-phosphoryl group is left at the trailer molecule.. Its function is as follows. Zinc phosphodiesterase, which displays some tRNA 3'-processing endonuclease activity. Probably involved in tRNA maturation, by removing a 3'-trailer from precursor tRNA. This is Ribonuclease Z from Salinispora arenicola (strain CNS-205).